A 127-amino-acid chain; its full sequence is Small ribosomal subunit protein uS13 (127 aa).

Residues 100–127 (GQRTRTNARTRKGVRKTVAGKKKAPAKK) form a disordered region. Residues 101–127 (QRTRTNARTRKGVRKTVAGKKKAPAKK) are compositionally biased toward basic residues.

This sequence belongs to the universal ribosomal protein uS13 family. As to quaternary structure, part of the 30S ribosomal subunit. Forms a loose heterodimer with protein S19. Forms two bridges to the 50S subunit in the 70S ribosome.

Its function is as follows. Located at the top of the head of the 30S subunit, it contacts several helices of the 16S rRNA. In the 70S ribosome it contacts the 23S rRNA (bridge B1a) and protein L5 of the 50S subunit (bridge B1b), connecting the 2 subunits; these bridges are implicated in subunit movement. Contacts the tRNAs in the A and P-sites. This is Small ribosomal subunit protein uS13 from Synechococcus sp. (strain JA-3-3Ab) (Cyanobacteria bacterium Yellowstone A-Prime).